We begin with the raw amino-acid sequence, 565 residues long: NAD-dependent malic enzyme (565 aa).

Residue tyrosine 104 is the Proton donor of the active site. Arginine 157 is an NAD(+) binding site. Lysine 175 acts as the Proton acceptor in catalysis. A divalent metal cation is bound by residues glutamate 246, aspartate 247, and aspartate 270. NAD(+) contacts are provided by aspartate 270 and asparagine 418.

Belongs to the malic enzymes family. In terms of assembly, homotetramer. Mg(2+) is required as a cofactor. Requires Mn(2+) as cofactor.

The enzyme catalyses (S)-malate + NAD(+) = pyruvate + CO2 + NADH. The catalysed reaction is oxaloacetate + H(+) = pyruvate + CO2. In Yersinia enterocolitica serotype O:8 / biotype 1B (strain NCTC 13174 / 8081), this protein is NAD-dependent malic enzyme.